We begin with the raw amino-acid sequence, 635 residues long: BTB/POZ domain and ankyrin repeat-containing protein NPR2 (635 aa).

One can recognise a BTB domain in the interval serine 97–proline 191. A compositionally biased stretch (gly residues) spans alanine 138–arginine 152. Residues alanine 138–proline 157 form a disordered region. The C2HC NPR-type zinc-finger motif lies at valine 194–proline 208. Zn(2+)-binding residues include cysteine 197, cysteine 202, histidine 204, and cysteine 207. ANK repeat units lie at residues lysine 317 to aspartate 347, asparagine 349 to leucine 376, and arginine 380 to glutamine 409. Residues glutamate 439–proline 576 form a salicylic acid-binding core (SBC) region. Arginine 484 contacts salicylate.

The protein belongs to the plant 'ANKYRIN-BTB/POZ' family. 'NPR1-like' subfamily. In terms of assembly, interacts with NRR. Interacts with TGAL1 and TGAL11.

The protein resides in the nucleus. It participates in protein modification; protein ubiquitination. Its function is as follows. Salicylic acid (SA)-binding substrate-specific adapter of an E3 ubiquitin-protein ligase complex (CUL3-RBX1-BTB) which mediates the ubiquitination and subsequent proteasomal degradation of target proteins. May be involved in regulating basal defense responses against pathogens, and may be involved in crosstalk between SA- and JA-dependent signaling pathways. Does not seem to be involved in defense response against the bacterial blight disease caused by Xanthomonas oryzae pv. oryzae (Xoo). Over-expression of NPR2/NH2 does not confer disease resistance to Xoo. This is BTB/POZ domain and ankyrin repeat-containing protein NPR2 from Oryza sativa subsp. japonica (Rice).